Here is a 2474-residue protein sequence, read N- to C-terminus: Highly reducing polyketide synthase 40 (2474 aa).

The region spanning 1–294 is the Ketosynthase family 3 (KS3) domain; the sequence is MFKETEIQQR…GSNAHIIIDD (294 aa). Residues Cys42, His177, and His217 each act as for beta-ketoacyl synthase activity in the active site. The Malonyl-CoA:ACP transacylase (MAT) domain occupies 459 to 798; that stretch reads FVFTGQGAQW…GYESVLRRGT (340 aa). The N-terminal hotdog fold stretch occupies residues 864 to 998; sequence HELLGAPVPD…GLVVTEYEQP (135 aa). One can recognise a PKS/mFAS DH domain in the interval 864–1182; it reads HELLGAPVPD…ITTVARSEGA (319 aa). The active-site Proton acceptor; for dehydratase activity is the His896. Residues 1027-1182 form a C-terminal hotdog fold region; that stretch reads KVETSFRQLY…ITTVARSEGA (156 aa). The active-site Proton donor; for dehydratase activity is the Asp1093. The interval 1232–1535 is methyltransferase (CMet) domain; sequence VEMMCFLYIK…DLHIYDFPDH (304 aa). One can recognise an Enoyl reductase (ER) domain in the interval 1770–2063; it reads GLLDSLQFQD…SGSHMGKLVL (294 aa). A Ketoreductase (KR) domain is found at 2087-2263; the sequence is ASYLLSGGLG…PGVAVDLGMI (177 aa). The region spanning 2385-2462 is the Carrier domain; sequence DAAKIVSAAI…ELAELAAKRS (78 aa). Position 2422 is an O-(pantetheine 4'-phosphoryl)serine (Ser2422).

It depends on pantetheine 4'-phosphate as a cofactor.

It participates in secondary metabolite biosynthesis. Its function is as follows. Highly reducing polyketide synthase; part of the gene cluster that mediates the biosynthesis of the gamma-pyrones fusapyrone (FPY) and deoxyfusapyrone (dFPY). FPY is an undecaketide and thus likely synthesized by the polyketide synthase FPY1 from acetyl-CoA functioning as starter unit and the addition of 10 malonyl-CoA extender units by successive Claisen-condensations. Next to this, FPY shares some rare features: C-glycosylated 4-deoxyglucose at C-3, a gem-dimethyl group at C-13, and an alpha-beta to beta-gamma double bond shift at C-20. During FPY biosynthesis mono-C-methyl groups are transferred to the tetra-, penta-, hexa- and heptaketide, while two C-methyl groups are transferred to the nonaketide, suggesting that the CMet domain is programmed to selectively catalyze two successive C-alpha-methylation reactions of the nonaketide, while other alpha-carbons are non- or mono-methylated only. While the origin of the 4'-deoxyglucose moiety remains opaque, its transfer to C-3 is most likely mediated by the C-glycosyltransferase FPY2. Next to this, the hydroxyl group present at C-33 and discriminating between FPY and dFPY, is likely to be installed by the cytochrome P450 monooxygenase FPY7. No putative function can be predicted for the remaining genes FPY3-FPY6. The protein is Highly reducing polyketide synthase 40 of Fusarium mangiferae (Mango malformation disease fungus).